Reading from the N-terminus, the 406-residue chain is MEVYLVGGAVRDKLLGRPVKERDYVVVGTTPANLLAQGYRPVGKDFPVFLHPQTQEEYALARTERKTGPGYKGFEVDAAPDVTLEEDLQRRDLTINAIAEAADGSLLDPFGGQQDLARGILRHVSPAFAEDPVRILRAARFAARFNFKVAPETLALMEAMVTAGEADHLVPERVWRELERALGESYPRRFFEILRACGALARIFPEIECLFGVPQPRRYHPEIDTGIHTLKVLEIAAHLSSDTQVRFAALTHDLGKGQTPSHEWPHHYGHGERGVALVLTLCQRLRVPKAYQALAVQVARYHNLVHQAQELRPGTILKLLNRVDAFRRPSRFEQFLLACEADARGRSGLENRPYPQANQLRLAFRAAAAVTARPLVAAGLRGEAIAEQLQQQRIKAIKQAVHTERG.

2 residues coordinate ATP: Gly8 and Arg11. The CTP site is built by Gly8 and Arg11. Positions 21 and 23 each coordinate Mg(2+). Arg91, Arg137, and Arg140 together coordinate ATP. Residues Arg91, Arg137, and Arg140 each coordinate CTP. Residues 225–326 (TGIHTLKVLE…LKLLNRVDAF (102 aa)) enclose the HD domain.

It belongs to the tRNA nucleotidyltransferase/poly(A) polymerase family. Bacterial CCA-adding enzyme type 1 subfamily. Monomer. Can also form homodimers and oligomers. Requires Mg(2+) as cofactor. It depends on Ni(2+) as a cofactor.

The catalysed reaction is a tRNA precursor + 2 CTP + ATP = a tRNA with a 3' CCA end + 3 diphosphate. It carries out the reaction a tRNA with a 3' CCA end + 2 CTP + ATP = a tRNA with a 3' CCACCA end + 3 diphosphate. In terms of biological role, catalyzes the addition and repair of the essential 3'-terminal CCA sequence in tRNAs without using a nucleic acid template. Adds these three nucleotides in the order of C, C, and A to the tRNA nucleotide-73, using CTP and ATP as substrates and producing inorganic pyrophosphate. tRNA 3'-terminal CCA addition is required both for tRNA processing and repair. Also involved in tRNA surveillance by mediating tandem CCA addition to generate a CCACCA at the 3' terminus of unstable tRNAs. While stable tRNAs receive only 3'-terminal CCA, unstable tRNAs are marked with CCACCA and rapidly degraded. The sequence is that of Multifunctional CCA protein from Nitrosococcus oceani (strain ATCC 19707 / BCRC 17464 / JCM 30415 / NCIMB 11848 / C-107).